The following is a 1461-amino-acid chain: A disintegrin and metalloproteinase with thrombospondin motifs adt-1 (1461 aa).

The N-terminal stretch at 1-21 (MPPFYIVITFLLSTVFRISQS) is a signal peptide. The propeptide occupies 22–163 (VHHHLNEEEL…HLQKERHLVY (142 aa)). An N-linked (GlcNAc...) asparagine glycan is attached at Asn69. Residues 190–197 (SFCDTSEQ) carry the Cysteine switch motif. The N-linked (GlcNAc...) asparagine glycan is linked to Asn212. In terms of domain architecture, Peptidase M12B spans 233–435 (ITLEIGLFLD…CSVREFNAFL (203 aa)). His388 serves as a coordination point for Zn(2+). Glu389 is an active-site residue. Zn(2+) is bound by residues His392 and His398. Cys405 and Cys410 are oxidised to a cystine. The Disintegrin domain occupies 464-546 (RLPGQRFTAD…TFGLTPVPID (83 aa)). TSP type-1 domains are found at residues 708–759 (HQWE…RDCE), 761–802 (FGEW…RPCD), 804–852 (EGCW…QKCI), 853–898 (SQSW…QQCP), 903–952 (LSVW…GPCE), 955–1000 (YLTW…IACL), 1035–1083 (SIHS…NSCL), 1087–1133 (IWSD…PSCS), 1148–1200 (APRW…GSCS), 1203–1260 (AGGW…NVCS), 1265–1321 (DGGW…ARCH), 1324–1378 (DGGW…PACD), and 1382–1435 (DGEW…RQSP). 3 disulfide bridges follow: Cys719/Cys751, Cys723/Cys758, and Cys735/Cys741. Intrachain disulfides connect Cys816–Cys846, Cys820–Cys851, Cys831–Cys836, Cys862–Cys892, Cys866–Cys897, and Cys877–Cys882. Cystine bridges form between Cys1047-Cys1077, Cys1051-Cys1082, and Cys1062-Cys1067. Intrachain disulfides connect Cys1160-Cys1194, Cys1162-Cys1199, Cys1173-Cys1184, Cys1215-Cys1253, Cys1219-Cys1259, Cys1231-Cys1243, Cys1277-Cys1314, Cys1281-Cys1320, Cys1292-Cys1304, Cys1336-Cys1372, Cys1340-Cys1377, and Cys1351-Cys1362.

Zn(2+) is required as a cofactor. In hermaphrodites, expressed in the vulva, head ganglia, ventral nerve cord and amphid neurons. Expressed in the rays of the male tail.

Its subcellular location is the secreted. Plays a role in ray morphogenesis in the male tail, probably by remodeling the extracellular matrix (ECM) in the cuticle. The chain is A disintegrin and metalloproteinase with thrombospondin motifs adt-1 from Caenorhabditis elegans.